A 156-amino-acid polypeptide reads, in one-letter code: Ribosomal RNA large subunit methyltransferase H (156 aa).

Residues leucine 72, glycine 104, and 123–128 (LGKMVW) contribute to the S-adenosyl-L-methionine site.

The protein belongs to the RNA methyltransferase RlmH family. In terms of assembly, homodimer.

The protein resides in the cytoplasm. The enzyme catalyses pseudouridine(1915) in 23S rRNA + S-adenosyl-L-methionine = N(3)-methylpseudouridine(1915) in 23S rRNA + S-adenosyl-L-homocysteine + H(+). Its function is as follows. Specifically methylates the pseudouridine at position 1915 (m3Psi1915) in 23S rRNA. The protein is Ribosomal RNA large subunit methyltransferase H of Roseobacter denitrificans (strain ATCC 33942 / OCh 114) (Erythrobacter sp. (strain OCh 114)).